A 212-amino-acid chain; its full sequence is MIIAIDGPAASGKGTLGKRLAAHYHFRHLDTGVIYRAVAKALLDAGADPADEARAIAAALELDPERFGHPALKARAIGEAASVVSTFPKVREALLTFQRQFAAEPPGAVLDGRDIGTVICPNADVKIFVEADPVVRARRRTLEARARGEEVDEAVVLADILKRDERDRNRPVAPLKAAADAHVLDNSNLDIEAGLKAAIAIVESVRVRSGRA.

7–15 contributes to the ATP binding site; the sequence is GPAASGKGT.

The protein belongs to the cytidylate kinase family. Type 1 subfamily.

It is found in the cytoplasm. It carries out the reaction CMP + ATP = CDP + ADP. The catalysed reaction is dCMP + ATP = dCDP + ADP. The polypeptide is Cytidylate kinase (Nitrobacter winogradskyi (strain ATCC 25391 / DSM 10237 / CIP 104748 / NCIMB 11846 / Nb-255)).